We begin with the raw amino-acid sequence, 415 residues long: Prostacyclin receptor (415 aa).

The disordered stretch occupies residues 1–21 (MMASDGHPGPPSVTPGSPLSA). The Extracellular segment spans residues 1-44 (MMASDGHPGPPSVTPGSPLSAGGREWQGMAGSCWNITYVQDSVG). 2 disulfide bridges follow: Cys33–Cys193 and Cys120–Cys198. An N-linked (GlcNAc...) asparagine glycan is attached at Asn35. Residues 45-66 (PATSTLMFVAGVVGNGLALGIL) traverse the membrane as a helical segment. At 67 to 79 (GARRRSHPSAFAV) the chain is on the cytoplasmic side. Residues 80–104 (LVTGLAVTDLLGTCFLSPAVFVAYA) form a helical membrane-spanning segment. Over 105–122 (RNSSLLGLAHGGTMLCDT) the chain is Extracellular. Residues 123-143 (FAFAMTFFGLASTLILFAMAV) form a helical membrane-spanning segment. Residues 144–162 (ERCLALSHPYLYAQLDGPR) lie on the Cytoplasmic side of the membrane. A helical transmembrane segment spans residues 163 to 186 (CARFALPSIYAFCCLFCSLPLLGL). Residues 187–215 (GEHQQYCPGSWCFIRMRSAQPGGCAFSLA) lie on the Extracellular side of the membrane. The chain crosses the membrane as a helical span at residues 216 to 236 (YASLMALLVTSIFFCNGSVTL). Over 237–263 (SLYHMYRQQRRHHGSFVPTSRAREDEV) the chain is Cytoplasmic. The chain crosses the membrane as a helical span at residues 264-288 (YHLILLALMTVIMAVCSLPLMIRGF). At 289–301 (TQAIAPDSREMGD) the chain is on the extracellular side. The chain crosses the membrane as a helical span at residues 302–322 (LLAFRFNAFNPILDPWVFILF). Residues 323-415 (RKAVFQRLKF…SEAIAACSLC (93 aa)) are Cytoplasmic-facing. The disordered stretch occupies residues 349–370 (PLSRPASGRRDPPAPTSLQAKE). At Ser365 the chain carries Phosphoserine. Cys412 carries the post-translational modification Cysteine methyl ester. Cys412 is lipidated: S-farnesyl cysteine. Positions 413–415 (SLC) are cleaved as a propeptide — removed in mature form.

Belongs to the G-protein coupled receptor 1 family. As to quaternary structure, interacts (non-isoprenylated C-terminus) with PDZK1. Post-translationally, isoprenylation does not influence ligand binding but is required for efficient coupling to the effectors adenylyl cyclase and phospholipase C.

It localises to the cell membrane. Functionally, receptor for prostacyclin (prostaglandin I2 or PGI2). The activity of this receptor is mediated by G(s) proteins which activate adenylate cyclase. The polypeptide is Prostacyclin receptor (Ptgir) (Mus musculus (Mouse)).